The chain runs to 293 residues: 4-hydroxy-tetrahydrodipicolinate synthase (293 aa).

Thr-47 is a binding site for pyruvate. Tyr-136 (proton donor/acceptor) is an active-site residue. Lys-164 acts as the Schiff-base intermediate with substrate in catalysis. Pyruvate is bound at residue Ile-206.

It belongs to the DapA family. As to quaternary structure, homotetramer; dimer of dimers.

It localises to the cytoplasm. The catalysed reaction is L-aspartate 4-semialdehyde + pyruvate = (2S,4S)-4-hydroxy-2,3,4,5-tetrahydrodipicolinate + H2O + H(+). It participates in amino-acid biosynthesis; L-lysine biosynthesis via DAP pathway; (S)-tetrahydrodipicolinate from L-aspartate: step 3/4. In terms of biological role, catalyzes the condensation of (S)-aspartate-beta-semialdehyde [(S)-ASA] and pyruvate to 4-hydroxy-tetrahydrodipicolinate (HTPA). The protein is 4-hydroxy-tetrahydrodipicolinate synthase of Listeria monocytogenes serotype 4a (strain HCC23).